Consider the following 572-residue polypeptide: Proline--tRNA ligase (572 aa).

Belongs to the class-II aminoacyl-tRNA synthetase family. ProS type 1 subfamily. As to quaternary structure, homodimer.

It localises to the cytoplasm. It carries out the reaction tRNA(Pro) + L-proline + ATP = L-prolyl-tRNA(Pro) + AMP + diphosphate. In terms of biological role, catalyzes the attachment of proline to tRNA(Pro) in a two-step reaction: proline is first activated by ATP to form Pro-AMP and then transferred to the acceptor end of tRNA(Pro). As ProRS can inadvertently accommodate and process non-cognate amino acids such as alanine and cysteine, to avoid such errors it has two additional distinct editing activities against alanine. One activity is designated as 'pretransfer' editing and involves the tRNA(Pro)-independent hydrolysis of activated Ala-AMP. The other activity is designated 'posttransfer' editing and involves deacylation of mischarged Ala-tRNA(Pro). The misacylated Cys-tRNA(Pro) is not edited by ProRS. The sequence is that of Proline--tRNA ligase from Cronobacter sakazakii (strain ATCC BAA-894) (Enterobacter sakazakii).